The chain runs to 407 residues: 1-deoxy-D-xylulose 5-phosphate reductoisomerase (407 aa).

Positions 25, 26, 27, 28, 53, and 136 each coordinate NADPH. Residue Lys-137 participates in 1-deoxy-D-xylulose 5-phosphate binding. Glu-138 serves as a coordination point for NADPH. A Mn(2+)-binding site is contributed by Asp-162. 1-deoxy-D-xylulose 5-phosphate is bound by residues Ser-163, Glu-164, Ser-188, and His-211. A Mn(2+)-binding site is contributed by Glu-164. Gly-217 contacts NADPH. 4 residues coordinate 1-deoxy-D-xylulose 5-phosphate: Ser-224, Asn-229, Lys-230, and Glu-233. Glu-233 provides a ligand contact to Mn(2+).

Belongs to the DXR family. It depends on Mg(2+) as a cofactor. Mn(2+) serves as cofactor.

It carries out the reaction 2-C-methyl-D-erythritol 4-phosphate + NADP(+) = 1-deoxy-D-xylulose 5-phosphate + NADPH + H(+). It participates in isoprenoid biosynthesis; isopentenyl diphosphate biosynthesis via DXP pathway; isopentenyl diphosphate from 1-deoxy-D-xylulose 5-phosphate: step 1/6. In terms of biological role, catalyzes the NADPH-dependent rearrangement and reduction of 1-deoxy-D-xylulose-5-phosphate (DXP) to 2-C-methyl-D-erythritol 4-phosphate (MEP). The polypeptide is 1-deoxy-D-xylulose 5-phosphate reductoisomerase (Rhodopseudomonas palustris (strain HaA2)).